A 106-amino-acid chain; its full sequence is Trp operon repressor homolog (106 aa).

A DNA-binding region spans residues 59–82 (QREIQQILNTSAATITRGSNMIKI).

Belongs to the TrpR family. As to quaternary structure, homodimer.

It is found in the cytoplasm. This protein is an aporepressor. When complexed with L-tryptophan it binds the operator region of the trp operon and prevents the initiation of transcription. This is Trp operon repressor homolog from Histophilus somni (strain 129Pt) (Haemophilus somnus).